Reading from the N-terminus, the 288-residue chain is UTP--glucose-1-phosphate uridylyltransferase (288 aa).

This sequence belongs to the UDPGP type 2 family.

It catalyses the reaction alpha-D-glucose 1-phosphate + UTP + H(+) = UDP-alpha-D-glucose + diphosphate. The protein operates within glycolipid metabolism; diglucosyl-diacylglycerol biosynthesis. Its function is as follows. Catalyzes the formation of UDP-glucose from glucose-1-phosphate and UTP. This is an intermediate step in the biosynthesis of diglucosyl-diacylglycerol (Glc2-DAG), i.e. a glycolipid found in the membrane, which is also used as a membrane anchor for lipoteichoic acid (LTA). This Staphylococcus epidermidis (strain ATCC 35984 / DSM 28319 / BCRC 17069 / CCUG 31568 / BM 3577 / RP62A) protein is UTP--glucose-1-phosphate uridylyltransferase (gtaB).